The sequence spans 233 residues: Small ribosomal subunit protein uS3 (233 aa).

The region spanning 39–108 (IRTALFKLLK…KLIVNVRVIE (70 aa)) is the KH type-2 domain.

This sequence belongs to the universal ribosomal protein uS3 family. Part of the 30S ribosomal subunit. Forms a tight complex with proteins S10 and S14.

Functionally, binds the lower part of the 30S subunit head. Binds mRNA in the 70S ribosome, positioning it for translation. In Mycoplasma mycoides subsp. mycoides SC (strain CCUG 32753 / NCTC 10114 / PG1), this protein is Small ribosomal subunit protein uS3.